The chain runs to 277 residues: Protein OPG166 (277 aa).

N29 and N58 each carry an N-linked (GlcNAc...) asparagine; by host glycan. Helical transmembrane passes span T124 to Y144, G156 to F176, I186 to S206, L219 to L239, and L247 to V267.

This sequence belongs to the orthopoxvirus OPG166 protein family.

It localises to the host membrane. In terms of biological role, promotes, when overexpressed, the influx of extracellular Ca(2+), leading to membrane permeability and host cell necrosis. The protein is Protein OPG166 (OPG166) of Vaccinia virus (strain Copenhagen) (VACV).